We begin with the raw amino-acid sequence, 340 residues long: Ketol-acid reductoisomerase (NADP(+)) (340 aa).

The KARI N-terminal Rossmann domain maps to Val-3–Thr-183. NADP(+)-binding positions include Phe-26–Gln-29, Lys-49, Ser-54, and Asp-84–Gln-87. Residue His-109 is part of the active site. Gly-135 is a binding site for NADP(+). Positions Thr-184–Ile-329 constitute a KARI C-terminal knotted domain. The Mg(2+) site is built by Asp-192, Glu-196, Glu-228, and Glu-232. Ser-253 is a substrate binding site.

It belongs to the ketol-acid reductoisomerase family. It depends on Mg(2+) as a cofactor.

The enzyme catalyses (2R)-2,3-dihydroxy-3-methylbutanoate + NADP(+) = (2S)-2-acetolactate + NADPH + H(+). It carries out the reaction (2R,3R)-2,3-dihydroxy-3-methylpentanoate + NADP(+) = (S)-2-ethyl-2-hydroxy-3-oxobutanoate + NADPH + H(+). The protein operates within amino-acid biosynthesis; L-isoleucine biosynthesis; L-isoleucine from 2-oxobutanoate: step 2/4. It functions in the pathway amino-acid biosynthesis; L-valine biosynthesis; L-valine from pyruvate: step 2/4. Functionally, involved in the biosynthesis of branched-chain amino acids (BCAA). Catalyzes an alkyl-migration followed by a ketol-acid reduction of (S)-2-acetolactate (S2AL) to yield (R)-2,3-dihydroxy-isovalerate. In the isomerase reaction, S2AL is rearranged via a Mg-dependent methyl migration to produce 3-hydroxy-3-methyl-2-ketobutyrate (HMKB). In the reductase reaction, this 2-ketoacid undergoes a metal-dependent reduction by NADPH to yield (R)-2,3-dihydroxy-isovalerate. The protein is Ketol-acid reductoisomerase (NADP(+)) of Campylobacter lari (strain RM2100 / D67 / ATCC BAA-1060).